We begin with the raw amino-acid sequence, 236 residues long: Uridylate kinase (236 aa).

10–13 provides a ligand contact to ATP; the sequence is KLSG. G52 provides a ligand contact to UMP. ATP-binding residues include G53 and R57. UMP-binding positions include D72 and 133–140; that span reads TGNPFFTT. Residues T160, Y166, and D169 each coordinate ATP.

The protein belongs to the UMP kinase family. In terms of assembly, homohexamer.

The protein localises to the cytoplasm. It carries out the reaction UMP + ATP = UDP + ADP. The protein operates within pyrimidine metabolism; CTP biosynthesis via de novo pathway; UDP from UMP (UMPK route): step 1/1. With respect to regulation, inhibited by UTP. Functionally, catalyzes the reversible phosphorylation of UMP to UDP. This Ralstonia nicotianae (strain ATCC BAA-1114 / GMI1000) (Ralstonia solanacearum) protein is Uridylate kinase.